We begin with the raw amino-acid sequence, 749 residues long: Taperin (749 aa).

The segment at 144 to 348 is disordered; that stretch reads PAAPCRRGSP…IRPSSKPDME (205 aa). Polar residues-rich tracts occupy residues 169-179, 230-239, and 250-266; these read SAATRTPTNRS, LQKTGSNSFT, and VNRSLSNGPMTQESPTG. Ser274 bears the Phosphoserine mark. The span at 323 to 335 shows a compositional bias: polar residues; it reads QRQWVSSATSAND. The span at 337–347 shows a compositional bias: basic and acidic residues; the sequence is FEIRPSSKPDM. Residues Ser401, Ser457, and Ser501 each carry the phosphoserine modification. Disordered regions lie at residues 502–586, 636–673, and 730–749; these read EEEA…TTLE, FEYPSESSLAQEEAEEEEEEEGEEDGEEEEVGPDSEKP, and LTPASQNDLSDFRSEPALYF. 2 stretches are compositionally biased toward polar residues: residues 534–544 and 558–570; these read ELLNRGSNTFT and HLSQTNGQSQQGA. Over residues 647-668 the composition is skewed to acidic residues; that stretch reads EEAEEEEEEEGEEDGEEEEVGP.

Belongs to the taperin family. Interacts with GRXCR2; the interaction restricts TPRN to the stereocilum basal region. Interacts with actin ACTB; the interaction may stabilize stereocilia. Interacts with CLIC5. Interacts with PTPRQ. TPRN, CLIC5 and PTPQR form concentric rings at the base of stereocilia and may form a complex. Interacts with phosphatase PPP1CA; the interaction results in inhibition of PPP1CA phosphatase activity. Interacts with DNA damage response proteins XRCC6/KU70, XRCC5/KU80, PARP1, TOP1 and TOP2A; these interactions recruit TPRN to sites of DNA damage where it may play a role in DNA repair. As to expression, in the organ of Corti, expressed in the inner ear hair cell stereocilia and the supporting cells (at protein level). Expressed in the sensory epithelia of the organ of Corti and vestibular end organs and, to a lesser extent, in Reisner's membrane and the spiral ligament (at protein level). At postnatal day 2, expression is detected in cochlea, liver, brain, kidney, heart and lung.

The protein resides in the cell projection. It localises to the stereocilium. Its subcellular location is the microvillus. It is found in the nucleus. The protein localises to the nucleoplasm. The protein resides in the cytoplasm. Its function is as follows. Essential for hearing. Required for maintenance of stereocilia on both inner and outer hair cells. Necessary for the integrity of the stereociliary rootlet. May act as an actin cytoskeleton regulator involved in the regulation of actin dynamics at the pointed end in hair cells. Forms rings at the base of stereocilia and binds actin filaments in the stereocilia which may stabilize the stereocilia. Acts as a strong inhibitor of PPP1CA phosphatase activity. Recruited to sites of DNA damage and may play a role in DNA damage repair. The protein is Taperin (Tprn) of Mus musculus (Mouse).